The primary structure comprises 668 residues: MIPKKLVHFEYIQINLASPERILQWGQRTLSNGEIVGEVTRSETINYRTLKPEMDGLFCERIFGPVKDWECHCGRYKRVRYNKNSEISIVCERCGVEVIESGVRRHRMGHIKLASPVTHVWYLKGIPSYISVILGMPRKDVENIVYYNNNDSISFKNISQFLTENRFFSNSTDILDDLLNIKEKEEEISGGEAIYKMLKNFDLKATAQKIREDLAENEAAWTQSSFFNGEDSDWVLDENQWNKKNQDWQIEEERRNKKRNKLIKRLRIINHFIATGAKPEWMVLSILPVLPPELRPMVQLDGGRFATSDLNDLYRRVINRNNRLAKLNNMLAPEIVVRSEKRMLQESVDALIDNGKRGKALVGNNKIPLKSLSDIIKGKQGRFRQNLLGKRVDYSGRSVIVVGPNLKLHQCGLPKEMAIELFQPFVIHTLINEGLANNIKGAKKIIQNSDPILWEILNQVIQGHPVLLNRAPTLHRLGIQAFEPILVEGRAIQLHPLVCPAFNADFDGDQMAVHIPLSLEAQTEARLLMLASSNLLSPATGLPIISPSQDMVLGCYYLTTEDIRLRGTKSHYFSSLEQVIMAYDQKKINLHTIVWVRFSGIIDSKYIKQNPIEIRVDSLGFVSYIYKNYQMRKDFKNNLISQYIRTTPGRILFNQVIQNSLDYSPSEY.

Zn(2+)-binding residues include C71, C73, C91, and C94. Mg(2+) is bound by residues D505, D507, and D509.

The protein belongs to the RNA polymerase beta' chain family. RpoC1 subfamily. As to quaternary structure, in plastids the minimal PEP RNA polymerase catalytic core is composed of four subunits: alpha, beta, beta', and beta''. When a (nuclear-encoded) sigma factor is associated with the core the holoenzyme is formed, which can initiate transcription. Mg(2+) is required as a cofactor. It depends on Zn(2+) as a cofactor.

It localises to the plastid. The protein resides in the chloroplast. It catalyses the reaction RNA(n) + a ribonucleoside 5'-triphosphate = RNA(n+1) + diphosphate. Functionally, DNA-dependent RNA polymerase catalyzes the transcription of DNA into RNA using the four ribonucleoside triphosphates as substrates. This is DNA-directed RNA polymerase subunit beta' from Mesostigma viride (Green alga).